We begin with the raw amino-acid sequence, 86 residues long: MHAYVYKSQRKQDTFVYLATRDDFSGLPAEVQAQLAPFSFVLEVALTPERRLAQADVATVREALGKHGFYLQLPKTRVLAGECDYD.

Positions methionine 1–cysteine 83 constitute a YcgL domain.

This is YcgL domain-containing protein XOO0428 from Xanthomonas oryzae pv. oryzae (strain MAFF 311018).